A 417-amino-acid polypeptide reads, in one-letter code: NADH-quinone oxidoreductase subunit D (417 aa).

This sequence belongs to the complex I 49 kDa subunit family. NDH-1 is composed of 14 different subunits. Subunits NuoB, C, D, E, F, and G constitute the peripheral sector of the complex.

It localises to the cell inner membrane. The catalysed reaction is a quinone + NADH + 5 H(+)(in) = a quinol + NAD(+) + 4 H(+)(out). Functionally, NDH-1 shuttles electrons from NADH, via FMN and iron-sulfur (Fe-S) centers, to quinones in the respiratory chain. The immediate electron acceptor for the enzyme in this species is believed to be ubiquinone. Couples the redox reaction to proton translocation (for every two electrons transferred, four hydrogen ions are translocated across the cytoplasmic membrane), and thus conserves the redox energy in a proton gradient. This is NADH-quinone oxidoreductase subunit D from Alkalilimnicola ehrlichii (strain ATCC BAA-1101 / DSM 17681 / MLHE-1).